Reading from the N-terminus, the 280-residue chain is uncharacterized protein (280 aa).

Helical transmembrane passes span 15–35 (IVDILLVAVILWIGVFIINRL), 68–88 (IGFIFYVISLFVHDFGKILAG), and 94–114 (IVIGFGAQSLIKDVLAGVFLI).

The protein belongs to the MscS (TC 1.A.23) family.

Its subcellular location is the cell membrane. May play a role in resistance to osmotic downshock. This is an uncharacterized protein from Bacillus subtilis (strain 168).